Here is a 528-residue protein sequence, read N- to C-terminus: Probable GTP-binding protein OBGM, mitochondrial (528 aa).

The N-terminal 45 residues, 1-45, are a transit peptide targeting the mitochondrion; the sequence is MWRRQHALLRRISLPKPPAATGIGCYYATEPEGRKPKTAPLQSRG. The Obg domain maps to 46–339; that stretch reads MVDRFRLRAK…TYLILELKSI (294 aa). Disordered regions lie at residues 52-87 and 167-212; these read LRAKGGDGGNGCISLRRSRSDRQGKPDGGNGGRGGD and HSPF…NHRG. The span at 77-86 shows a compositional bias: gly residues; sequence PDGGNGGRGG. Residues 197–207 are compositionally biased toward basic and acidic residues; it reads NTAENDCERGN. Positions 340 to 513 constitute an OBG-type G domain; sequence ADVGLVGMPN…LRVGLRDLMD (174 aa). GTP is bound by residues 346 to 353 and 393 to 397; these read GMPNAGKS and DIPGL.

Belongs to the TRAFAC class OBG-HflX-like GTPase superfamily. OBG GTPase family.

The protein localises to the mitochondrion. Its function is as follows. May bind GTP and have GTPase activity. This chain is Probable GTP-binding protein OBGM, mitochondrial (OBGM), found in Oryza sativa subsp. japonica (Rice).